Consider the following 441-residue polypeptide: ACT domain-containing protein ACR8 (441 aa).

ACT domains follow at residues 34 to 110 (IVKV…NIEV), 115 to 196 (ALEL…SAAK), 248 to 324 (VVNV…ALEG), and 326 to 405 (RLEL…TMYH).

In terms of tissue distribution, expressed in roots, leaves, flowers and siliques.

Functionally, may bind amino acids. This chain is ACT domain-containing protein ACR8, found in Arabidopsis thaliana (Mouse-ear cress).